The sequence spans 223 residues: Probable transaldolase (223 aa).

Catalysis depends on K92, which acts as the Schiff-base intermediate with substrate.

It belongs to the transaldolase family. Type 3B subfamily.

The protein localises to the cytoplasm. It catalyses the reaction D-sedoheptulose 7-phosphate + D-glyceraldehyde 3-phosphate = D-erythrose 4-phosphate + beta-D-fructose 6-phosphate. Its pathway is carbohydrate degradation; pentose phosphate pathway; D-glyceraldehyde 3-phosphate and beta-D-fructose 6-phosphate from D-ribose 5-phosphate and D-xylulose 5-phosphate (non-oxidative stage): step 2/3. Functionally, transaldolase is important for the balance of metabolites in the pentose-phosphate pathway. This is Probable transaldolase from Thermus thermophilus (strain ATCC BAA-163 / DSM 7039 / HB27).